The primary structure comprises 191 residues: Rho-related GTP-binding protein RhoH (191 aa).

A GTP-binding site is contributed by 11 to 18 (GDSAVGKT). Positions 33-41 (YKPTVYENT) match the Effector region motif. Residue 58-62 (DTAGN) coordinates GTP. The tract at residues 73-86 (YQQADVVLMCYSVA) is interaction with ZAP70. 116–119 (TQTD) contacts GTP. Cysteine methyl ester is present on Cys-188. The S-geranylgeranyl cysteine moiety is linked to residue Cys-188. The propeptide at 189 to 191 (KIL) is removed in mature form.

Belongs to the small GTPase superfamily. Rho family. In terms of assembly, interacts with GDI1 and GDI2. Interacts with ZAP70 (via SH2 domains) and the interaction is enhanced by its phosphorylation by LCK. Interacts with SYK and the interaction is enhanced by its phosphorylation by FYN. In terms of processing, phosphorylated on tyrosine by LCK. Phosphorylated by FYN. Phosphorylation enhances the interactions with ZAP70 and SYK and is critical for its function in thymocyte development.

It localises to the cytoplasm. The protein resides in the cell membrane. Functionally, binds GTP but lacks intrinsic GTPase activity and is resistant to Rho-specific GTPase-activating proteins. Inhibits the activation of NF-kappa-B by TNF and IKKB and the activation of CRK/p38 by TNF. Inhibits activities of RAC1, RHOA and CDC42. Negatively regulates leukotriene production in neutrophils. Negative regulator of hematopoietic progenitor cell proliferation, survival and migration. Critical regulator of thymocyte development and T-cell antigen receptor (TCR) signaling by mediating recruitment and activation of ZAP70. Required for phosphorylation of CD3Z, membrane translocation of ZAP70 and subsequent activation of the ZAP70-mediated pathways. Essential for efficient beta-selection and positive selection by promoting the ZAP70-dependent phosphorylation of the LAT signalosome during pre-TCR and TCR signaling. Crucial for thymocyte maturation during DN3 to DN4 transition and during positive selection. Plays critical roles in mast cell function by facilitating phosphorylation of SYK in Fc epsilon RI-mediated signal transduction. Essential for the phosphorylation of LAT, LCP2, PLCG1 and PLCG2 and for Ca(2+) mobilization in mast cells. The polypeptide is Rho-related GTP-binding protein RhoH (RHOH) (Bos taurus (Bovine)).